The following is a 443-amino-acid chain: Probable D-serine dehydratase (443 aa).

Position 106 is an N6-(pyridoxal phosphate)lysine (K106).

The protein belongs to the serine/threonine dehydratase family. DsdA subfamily. It depends on pyridoxal 5'-phosphate as a cofactor.

The catalysed reaction is D-serine = pyruvate + NH4(+). The sequence is that of Probable D-serine dehydratase from Cupriavidus pinatubonensis (strain JMP 134 / LMG 1197) (Cupriavidus necator (strain JMP 134)).